A 465-amino-acid chain; its full sequence is tRNA-2-methylthio-N(6)-dimethylallyladenosine synthase (465 aa).

Residues 26–141 (MRAHIITYGC…LPEALKANER (116 aa)) enclose the MTTase N-terminal domain. Residues cysteine 35, cysteine 71, cysteine 104, cysteine 173, cysteine 177, and cysteine 180 each coordinate [4Fe-4S] cluster. Residues 159–388 (PKGALSAHVT…IEKQKEWSYR (230 aa)) form the Radical SAM core domain. The 63-residue stretch at 391-453 (LEWVGKTVEV…PHLLFGEVVG (63 aa)) folds into the TRAM domain.

Belongs to the methylthiotransferase family. MiaB subfamily. As to quaternary structure, monomer. It depends on [4Fe-4S] cluster as a cofactor.

The protein localises to the cytoplasm. It carries out the reaction N(6)-dimethylallyladenosine(37) in tRNA + (sulfur carrier)-SH + AH2 + 2 S-adenosyl-L-methionine = 2-methylsulfanyl-N(6)-dimethylallyladenosine(37) in tRNA + (sulfur carrier)-H + 5'-deoxyadenosine + L-methionine + A + S-adenosyl-L-homocysteine + 2 H(+). In terms of biological role, catalyzes the methylthiolation of N6-(dimethylallyl)adenosine (i(6)A), leading to the formation of 2-methylthio-N6-(dimethylallyl)adenosine (ms(2)i(6)A) at position 37 in tRNAs that read codons beginning with uridine. The protein is tRNA-2-methylthio-N(6)-dimethylallyladenosine synthase of Thermus thermophilus (strain ATCC BAA-163 / DSM 7039 / HB27).